We begin with the raw amino-acid sequence, 330 residues long: Aquaporin-3 (330 aa).

The Cytoplasmic portion of the chain corresponds to 1 to 40 (MSATPIIHLRDVKKRTGVLNAWERVRNKPQVHWAMECFAE). The helical transmembrane segment at 41–61 (ALGVFFYVYFGLGSTAAWVIG) threads the bilayer. At 62–71 (NILKQSGLSS) the chain is on the extracellular side. Residues 72–92 (VFQIGFAYAFGILFAIGVCAA) form a helical membrane-spanning segment. Over 93–124 (TSGGHFNPCVTIAFTIFRGFPPLKAVRYIVAQ) the chain is Cytoplasmic. An NPA 1 motif is present at residues 99 to 101 (NPC). The chain crosses the membrane as a helical span at residues 125–145 (ILGAYIASALVYNQWKVLIVE). Topologically, residues 146–157 (SELLLKQAGVYE) are extracellular. The helical transmembrane segment at 158–178 (TTMFTPNGPAGIFALYLLPGA) threads the bilayer. Topologically, residues 179–183 (QTLPR) are cytoplasmic. A helical transmembrane segment spans residues 184–204 (AFLNEFVNCFVLALVIWAALD). The Extracellular portion of the chain corresponds to 205 to 207 (PTS). Residues 208-228 (FMIPPVMAPFIIAAAYAGSIW) form a helical membrane-spanning segment. Over 229-264 (GYAVPAISLNSARDIGCRLFALTIWGKSAAGGSYSA) the chain is Cytoplasmic. Positions 238–240 (NSA) match the NPA 2 motif. Residues 265-285 (IAALVNIPATLLAAVVYELFL) form a helical membrane-spanning segment. The Extracellular segment spans residues 286–330 (VDSDRVVAGSHLEFMNVAANHRRHRQQAEDDNLVEADDSSQEKPV). The interval 308–330 (RHRQQAEDDNLVEADDSSQEKPV) is disordered. Over residues 314 to 324 (EDDNLVEADDS) the composition is skewed to acidic residues.

The protein belongs to the MIP/aquaporin (TC 1.A.8) family.

The protein resides in the cell membrane. The catalysed reaction is H2O(in) = H2O(out). The enzyme catalyses CO2(out) = CO2(in). Its function is as follows. Water channel required to facilitate the transport of water across membranes. Also mediates the transport of carbon dioxide across the membrane. In Laccaria bicolor (Bicoloured deceiver), this protein is Aquaporin-3.